Reading from the N-terminus, the 971-residue chain is E3 ubiquitin-protein ligase MIB2 (971 aa).

In terms of domain architecture, MIB/HERC2 1 spans 1–80 (MDLDPHAGVQ…AHDLLLYDNA (80 aa)). A ZZ-type zinc finger spans residues 86 to 138 (HPNIICDCCKKHGLRGMRWKCRVCFDYDLCTQCYMHNKHDLTHAFERYETSHS). Cys91, Cys94, Cys106, Cys109, Cys115, Cys118, His124, and His128 together coordinate Zn(2+). The MIB/HERC2 2 domain maps to 149 to 227 (LPRIPLRGIF…KVDLKCVGEA (79 aa)). Ser251 carries the post-translational modification Phosphoserine. 9 ANK repeats span residues 478 to 507 (QGRT…SVDL), 511 to 540 (EGNT…GVDA), 544 to 573 (TRST…DVNL), 577 to 609 (HADT…DVTA), 613 to 642 (QGFT…QLVD), 647 to 677 (DGFT…DVNV), 681 to 710 (KLQS…NVNT), 714 to 742 (EGDT…DPGP), and 783 to 812 (RGRS…ERQA). 2 RING-type zinc fingers span residues 848–883 (CLVC…IRCQ) and 927–960 (CPIC…PICR).

As to quaternary structure, interacts with actin monomer. In terms of processing, ubiquitinated. Possibly via autoubiquitination.

The protein localises to the cytoplasm. Its subcellular location is the endosome. It catalyses the reaction S-ubiquitinyl-[E2 ubiquitin-conjugating enzyme]-L-cysteine + [acceptor protein]-L-lysine = [E2 ubiquitin-conjugating enzyme]-L-cysteine + N(6)-ubiquitinyl-[acceptor protein]-L-lysine.. The protein operates within protein modification; protein ubiquitination. In terms of biological role, E3 ubiquitin-protein ligase that mediates ubiquitination of Delta receptors, which act as ligands of Notch proteins. Positively regulates the Delta-mediated Notch signaling by ubiquitinating the intracellular domain of Delta, leading to endocytosis of Delta receptors. The chain is E3 ubiquitin-protein ligase MIB2 (Mib2) from Rattus norvegicus (Rat).